Here is a 108-residue protein sequence, read N- to C-terminus: UPF0235 protein MM_0822 (108 aa).

It belongs to the UPF0235 family.

The polypeptide is UPF0235 protein MM_0822 (Methanosarcina mazei (strain ATCC BAA-159 / DSM 3647 / Goe1 / Go1 / JCM 11833 / OCM 88) (Methanosarcina frisia)).